A 631-amino-acid chain; its full sequence is Pescadillo homolog (631 aa).

The BRCT domain maps to 321–414; that stretch reads RLRNLFKGLK…QLLPTNKYFL (94 aa). Disordered regions lie at residues 450 to 469 and 489 to 569; these read HAQS…EDDT and EYKK…MVKP. Serine 453 and serine 457 each carry phosphoserine. 2 stretches are compositionally biased toward acidic residues: residues 454–469 and 499–524; these read DDES…EDDT and VNED…EELD. Residues 510-541 adopt a coiled-coil conformation; the sequence is FDGEQESDEEEEELDEKTKRLQEEKKKMSVQS. The span at 525 to 536 shows a compositional bias: basic and acidic residues; the sequence is EKTKRLQEEKKK. The segment covering 543–552 has biased composition (basic residues); that stretch reads KVHKVNKRQL. Positions 553–562 are enriched in basic and acidic residues; the sequence is HKAEVDEHRL.

This sequence belongs to the pescadillo family.

Its subcellular location is the nucleus. The protein localises to the nucleolus. It is found in the nucleoplasm. In terms of biological role, required for maturation of ribosomal RNAs and formation of the large ribosomal subunit. The protein is Pescadillo homolog of Drosophila mojavensis (Fruit fly).